A 439-amino-acid polypeptide reads, in one-letter code: UPF0229 protein Nham_0975 (439 aa).

The disordered stretch occupies residues 39–106 (RSGRISDADG…AGTPDPSMKD (68 aa)). Over residues 58-76 (STDEPRFEAAKDSGRREHV) the composition is skewed to basic and acidic residues.

Belongs to the UPF0229 family.

This Nitrobacter hamburgensis (strain DSM 10229 / NCIMB 13809 / X14) protein is UPF0229 protein Nham_0975.